The sequence spans 444 residues: Magnesium transporter MRS2-F (444 aa).

A disordered region spans residues 128-155 (FTDMEGESSAVTSPFPALTSTTPNELEM). Residues 145 to 155 (LTSTTPNELEM) are compositionally biased toward polar residues. Residues 195–258 (VCLESACRSL…QKVRDELEHL (64 aa)) adopt a coiled-coil conformation. The helical transmembrane segment at 370-390 (GVMLSTATVVITAGVAVVGLF) threads the bilayer. The Required for magnesium transport activity motif lies at 391 to 393 (GMN). The helical transmembrane segment at 415-435 (FWETTLGTIAGCTVMYIVAMG) threads the bilayer.

Belongs to the CorA metal ion transporter (MIT) (TC 1.A.35.5) family.

It localises to the membrane. Its function is as follows. Magnesium transporter that may mediate the influx of magnesium. In Oryza sativa subsp. indica (Rice), this protein is Magnesium transporter MRS2-F (MRS2-F).